The primary structure comprises 366 residues: Adenosine deaminase (366 aa).

Zn(2+) is bound by residues His19 and His21. His21, Asp23, and Gly181 together coordinate substrate. His208 provides a ligand contact to Zn(2+). Glu211 serves as the catalytic Proton donor. Zn(2+) is bound at residue Asp304.

Belongs to the metallo-dependent hydrolases superfamily. Adenosine and AMP deaminases family. Adenosine deaminase subfamily. It depends on Zn(2+) as a cofactor.

The catalysed reaction is adenosine + H2O + H(+) = inosine + NH4(+). It carries out the reaction 2'-deoxyadenosine + H2O + H(+) = 2'-deoxyinosine + NH4(+). Catalyzes the hydrolytic deamination of adenosine and 2-deoxyadenosine. The sequence is that of Adenosine deaminase from Mycobacterium avium (strain 104).